Here is a 286-residue protein sequence, read N- to C-terminus: uncharacterized protein (286 aa).

Ile54, Asn128, and Lys162 together coordinate NADP(+). Ser178 acts as the Proton donor in catalysis. NADP(+)-binding residues include Tyr192, Lys196, Ile225, and Thr227. Tyr192 (proton acceptor) is an active-site residue. The active-site Lowers pKa of active site Tyr is Lys196.

Belongs to the short-chain dehydrogenases/reductases (SDR) family.

This is an uncharacterized protein from Schizosaccharomyces pombe (strain 972 / ATCC 24843) (Fission yeast).